A 160-amino-acid polypeptide reads, in one-letter code: 6,7-dimethyl-8-ribityllumazine synthase (160 aa).

Residues W28, 59-61, and 81-83 each bind 5-amino-6-(D-ribitylamino)uracil; these read ALE and CVI. 86–87 is a (2S)-2-hydroxy-3-oxobutyl phosphate binding site; sequence ET. Residue H89 is the Proton donor of the active site. N114 contributes to the 5-amino-6-(D-ribitylamino)uracil binding site. R128 is a (2S)-2-hydroxy-3-oxobutyl phosphate binding site.

This sequence belongs to the DMRL synthase family.

The catalysed reaction is (2S)-2-hydroxy-3-oxobutyl phosphate + 5-amino-6-(D-ribitylamino)uracil = 6,7-dimethyl-8-(1-D-ribityl)lumazine + phosphate + 2 H2O + H(+). It functions in the pathway cofactor biosynthesis; riboflavin biosynthesis; riboflavin from 2-hydroxy-3-oxobutyl phosphate and 5-amino-6-(D-ribitylamino)uracil: step 1/2. Its function is as follows. Catalyzes the formation of 6,7-dimethyl-8-ribityllumazine by condensation of 5-amino-6-(D-ribitylamino)uracil with 3,4-dihydroxy-2-butanone 4-phosphate. This is the penultimate step in the biosynthesis of riboflavin. This chain is 6,7-dimethyl-8-ribityllumazine synthase, found in Corynebacterium jeikeium (strain K411).